We begin with the raw amino-acid sequence, 324 residues long: Viral cathepsin (324 aa).

The first 16 residues, 1-16 (MNKIVLYLLVYGAVQC), serve as a signal peptide directing secretion. Positions 17–113 (AAYDVLKAPN…VVLDRPPDKG (97 aa)) are cleaved as a propeptide — activation peptide. 3 disulfide bridges follow: Cys134–Cys175, Cys168–Cys208, and Cys263–Cys311. Cys137 is an active-site residue. N-linked (GlcNAc...) asparagine; by host glycosylation occurs at Asn159. Catalysis depends on residues His270 and Asn290.

The protein belongs to the peptidase C1 family. In terms of processing, synthesized as an inactive proenzyme and activated by proteolytic removal of the inhibitory propeptide.

It catalyses the reaction Endopeptidase of broad specificity, hydrolyzing substrates of both cathepsin L and cathepsin B.. Its function is as follows. Cysteine protease that plays an essential role in host liquefaction to facilitate horizontal transmission of the virus. May participate in the degradation of foreign protein expressed by the baculovirus system. This is Viral cathepsin (Vcath) from Choristoneura fumiferana nuclear polyhedrosis virus (CfMNPV).